The following is a 352-amino-acid chain: Transcription factor MYB86 (352 aa).

2 consecutive HTH myb-type domains span residues 9–61 (KQKL…INYL) and 62–116 (RPDL…KKKL). DNA-binding regions (H-T-H motif) lie at residues 37–61 (WSSVPKLAGLQRCGKSCRLRWINYL) and 89–112 (WSQIATRLPGRTDNEIKNFWNSCL).

In terms of tissue distribution, expressed in stems, flowers and seeds. Weakly expressed in leaves and roots.

It is found in the nucleus. Functionally, probable transcription factor. This is Transcription factor MYB86 (MYB86) from Arabidopsis thaliana (Mouse-ear cress).